The sequence spans 1125 residues: MPRAPRCRAVRALLRASYRQVLPLAAFVRRLRPQGHRLVRRGDPAAFRALVAQCLVCVPWDAQPPPAAPSFRQVSCLKELVARVVQRLCERGARNVLAFGFTLLAGARGGPPVAFTTSVRSYLPNTVTDTLRGSGAWGLLLHRVGDDVLTHLLSRCALYLLVPPTCAYQVCGPPLYDLRAAAAAARRPTRQVGGTRAGFGLPRPASSNGGHGEAEGLLEARAQGARRRRSSARGRLPPAKRPRRGLEPGRDLEGQVARSPPRVVTPTRDAAEAKSRKGDVPGPCRLFPGGERGVGSASWRLSPSEGEPGAGACAETKRFLYCSGGGEQLRRSFLLCSLPPSLAGARTLVETIFLDSKPGPPGAPRRPRRLPARYWQMRPLFRKLLGNHARSPYGALLRAHCPLPASAPRAGPDHQKCPGVGGCPSERPAAAPEGEANSGRLVQLLRQHSSPWQVYGLLRACLRRLVPAGLWGSRHNERRFLRNVKKLLSLGKHGRLSQQELTWKMKVQDCAWLRASPGARCVPAAEHRQREAVLGRFLHWLMGAYVVELLRSFFYVTETTFQKNRLFFFRKRIWSQLQRLGVRQHLDRVRLRELSEAEVRQHQEARPALLTSRLRFVPKPGGLRPIVNVGCVEGAPAPPRDKKVQHLSSRVKTLFAVLNYERARRPGLLGASVLGMDDIHRAWRAFVLPLRARGPAPPLYFVKVDVVGAYDALPQDKLAEVIANVLQPQENTYCVRHCAMVRTARGRMRKSFKRHVSTFSDFQPYLRQLVEHLQAMGSLRDAVVIEQSCSLNEPGSSLFNLFLHLVRSHVIRIGGRSYIQCQGIPQGSILSTLLCSFCYGDMENKLFPGVQQDGVLLRLVDDFLLVTPHLTRARDFLRTLVRGVPEYGCQVNLRKTVVNFPVEPGALGGAAPLQLPAHCLFPWCGLLLDTRTLEVHGDHSSYARTSIRASLTFTQGFKPGRNMRRKLLAVLQLKCHGLFLDLQVNSLQTVFTNVYKIFLLQAYRFHACVLQLPFSQPVRSSPAFFLQVIADTASRGYALLKARNAGASLGARGAAGLFPSEAAQWLCLHAFLLKLARHRVTYSRLLGALRTARARLHRQLPGPTRAALEAAADPALTADFKTILD.

The tract at residues 1–234 (MPRAPRCRAV…ARRRRSSARG (234 aa)) is RNA-interacting domain 1. The segment at 58-199 (VPWDAQPPPA…RQVGGTRAGF (142 aa)) is GQ motif. A required for regulating specificity for telomeric DNA and for processivity for primer elongation region spans residues 137 to 141 (WGLLL). The disordered stretch occupies residues 186–308 (RRPTRQVGGT…WRLSPSEGEP (123 aa)). Basic residues predominate over residues 224–243 (GARRRRSSARGRLPPAKRPR). A Bipartite nuclear localization signal motif is present at residues 226–244 (RRRRSSARGRLPPAKRPRR). At serine 231 the chain carries Phosphoserine; by PKB/AKT1. Residues 235 to 312 (RLPPAKRPRR…PSEGEPGAGA (78 aa)) form a linker region. Basic and acidic residues-rich tracts occupy residues 244–253 (RGLEPGRDLE) and 269–279 (DAAEAKSRKGD). Residues 290 to 531 (GERGVGSASW…VPAAEHRQRE (242 aa)) are required for oligomerization. Residues 313–543 (CAETKRFLYC…LGRFLHWLMG (231 aa)) are RNA-interacting domain 2. The TFLY; involved in RNA binding motif lies at 316-321 (TKRFLY). The interval 364–514 (PRRPRRLPAR…MKVQDCAWLR (151 aa)) is QFP motif. A CP motif region spans residues 385–405 (LGNHARSPYGALLRAHCPLPA). At serine 450 the chain carries Phosphoserine; by DYRK2. Residues 598-928 (EVRQHQEARP…CLFPWCGLLL (331 aa)) form the Reverse transcriptase domain. Tyrosine 700 is subject to Phosphotyrosine; by SRC-type Tyr-kinases. Residues aspartate 705, aspartate 861, and aspartate 862 each coordinate Mg(2+). Residues 907-921 (LGGAAPLQLPAHCLF) are required for oligomerization. The primer grip sequence stretch occupies residues 923–927 (WCGLL). The interval 929–1125 (DTRTLEVHGD…LTADFKTILD (197 aa)) is CTE.

This sequence belongs to the reverse transcriptase family. Telomerase subfamily. In terms of assembly, catalytic component of the telomerase holoenzyme complex composed of one molecule of TERT, one molecule of WRAP53/TCAB1, two molecules of H/ACA ribonucleoprotein complex subunits DKC1, NOP10, NHP2 and GAR1, and a telomerase RNA template component (TERC). The telomerase holoenzyme complex is associated with TEP1, SMG6/EST1A and POT1. The molecular chaperone HSP90/P23 complex is required for correct assembly and stabilization of the active telomerase. Interacts directly with HSP90A and PTGES3. Interacts with HSPA1A; the interaction occurs in the absence of TERC and dissociates once the complex has formed. Interacts with RAN; the interaction promotes nuclear export of TERT. Interacts with XPO1. Interacts with PTPN11; the interaction retains TERT in the nucleus. Interacts with NCL (via RRM1 and C-terminal RRM4/Arg/Gly-rich domains); the interaction is important for nucleolar localization of TERT. Interacts with SMARCA4 (via the bromodomain); the interaction regulates Wnt-mediated signaling. Interacts with MCRS1 (isoform MCRS2); the interaction inhibits in vitro telomerase activity. Interacts with PIF1; the interaction has no effect on the elongation activity of TERT. Interacts with PML; the interaction recruits TERT to PML bodies and inhibits telomerase activity. Interacts with GNL3L. Interacts with isoform 1 and isoform 2 of NVL. Interacts with DHX36. Interacts with ATF7. Post-translationally, phosphorylation at Tyr-700 under oxidative stress leads to translocation of TERT to the cytoplasm and reduces its antiapoptotic activity. Dephosphorylated by SHP2/PTPN11 leading to nuclear retention. Phosphorylation at Ser-231 by the AKT pathway promotes nuclear location. Phosphorylation at the G2/M phase at Ser-450 by DYRK2 promotes ubiquitination by the EDVP complex and degradation. In terms of processing, ubiquitinated by the EDVP complex, a E3 ligase complex following phosphorylation at Ser-450 by DYRK2. Ubiquitinated leads to proteasomal degradation.

Its subcellular location is the nucleus. It localises to the nucleolus. The protein localises to the nucleoplasm. It is found in the chromosome. The protein resides in the telomere. Its subcellular location is the cytoplasm. It localises to the PML body. The enzyme catalyses DNA(n) + a 2'-deoxyribonucleoside 5'-triphosphate = DNA(n+1) + diphosphate. Functionally, telomerase is a ribonucleoprotein enzyme essential for the replication of chromosome termini in most eukaryotes. Active in progenitor and cancer cells. Inactive, or very low activity, in normal somatic cells. Catalytic component of the teleromerase holoenzyme complex whose main activity is the elongation of telomeres by acting as a reverse transcriptase that adds simple sequence repeats to chromosome ends by copying a template sequence within the RNA component of the enzyme. Catalyzes the RNA-dependent extension of 3'-chromosomal termini with the 6-nucleotide telomeric repeat unit, 5'-TTAGGG-3'. The catalytic cycle involves primer binding, primer extension and release of product once the template boundary has been reached or nascent product translocation followed by further extension. More active on substrates containing 2 or 3 telomeric repeats. Telomerase activity is regulated by a number of factors including telomerase complex-associated proteins, chaperones and polypeptide modifiers. Modulates Wnt signaling. Plays important roles in aging and antiapoptosis. In Bos taurus (Bovine), this protein is Telomerase reverse transcriptase (TERT).